The chain runs to 660 residues: Glycine betaine transporter (660 aa).

Residues M1–N13 are Cytoplasmic-facing. Residues P14–A34 form a helical membrane-spanning segment. Residues P35 to S52 lie on the Periplasmic side of the membrane. Residues F53 to C73 form a helical membrane-spanning segment. Over S74–S93 the chain is Cytoplasmic. Residues S94–A114 traverse the membrane as a helical segment. Residues E115 to R139 lie on the Periplasmic side of the membrane. The chain crosses the membrane as a helical span at residues V140–L160. The Cytoplasmic segment spans residues S161–T195. A helical transmembrane segment spans residues F196–I216. The Periplasmic segment spans residues S217–S230. The helical transmembrane segment at F231 to G251 threads the bilayer. At L252–N263 the chain is on the cytoplasmic side. A helical transmembrane segment spans residues L264–L284. At Q285–G316 the chain is on the periplasmic side. Residues W317 to A337 traverse the membrane as a helical segment. The Cytoplasmic segment spans residues R338 to E347. The chain crosses the membrane as a helical span at residues F348–G368. At N369–S401 the chain is on the periplasmic side. Residues L402–T422 traverse the membrane as a helical segment. The Cytoplasmic portion of the chain corresponds to S423–R446. A helical transmembrane segment spans residues L447–T467. At A468–S471 the chain is on the periplasmic side. A helical membrane pass occupies residues A472 to I492. Over K493 to N660 the chain is Cytoplasmic.

It belongs to the BCCT transporter (TC 2.A.15) family.

It is found in the cell inner membrane. With respect to regulation, uptake is activated by NaCl, KCl or mannose gradients across the cell membrane. Inhibited by the protonophore 3,3',4',5-tetrachlorosalicylanilide (TCS). In terms of biological role, energy-dependent uptake of glycine betaine in response to high salinity. In Acinetobacter baylyi (strain ATCC 33305 / BD413 / ADP1), this protein is Glycine betaine transporter.